The primary structure comprises 220 residues: Ribosomal RNA small subunit methyltransferase G (220 aa).

Residues Gly-78, Phe-83, 129-130, and Arg-146 contribute to the S-adenosyl-L-methionine site; that span reads GE.

The protein belongs to the methyltransferase superfamily. RNA methyltransferase RsmG family.

It localises to the cytoplasm. It catalyses the reaction guanosine(527) in 16S rRNA + S-adenosyl-L-methionine = N(7)-methylguanosine(527) in 16S rRNA + S-adenosyl-L-homocysteine. Functionally, specifically methylates the N7 position of guanine in position 527 of 16S rRNA. The protein is Ribosomal RNA small subunit methyltransferase G of Geobacter metallireducens (strain ATCC 53774 / DSM 7210 / GS-15).